We begin with the raw amino-acid sequence, 237 residues long: Protein VP5 (237 aa).

Residues 1 to 148 (MLSIIRRKTR…TKQRCKANLR (148 aa)) are Cytoplasmic-facing. Residues 84-237 (SSSKDPDISG…SKLGKSRDIC (154 aa)) are disordered. Basic and acidic residues-rich tracts occupy residues 85 to 97 (SSKD…QKDK) and 116 to 130 (SRVR…HEPI). Residues 149–165 (GDSGFVSIGRSNHPKLS) form a helical membrane-spanning segment. At 166–237 (REDCHNTRVP…SKLGKSRDIC (72 aa)) the chain is on the extracellular side. Basic residues predominate over residues 214–231 (RSHRRKKAKTRTKTSKLG).

The protein resides in the host membrane. This Drosophila x virus (isolate Chung/1996) (DXV) protein is Protein VP5 (VP5).